Consider the following 342-residue polypeptide: MGLFTTRQLLGYTEQKVKFRALFLELFFRRTVNFHTEEVMLDKITGKTPVAAYVSPVVEGKVLRHRGGETRVLRPGYVKPKHEFNYQQAVERLPGEDPSQLNDPAYRRLRIITDNLKQEEHAIVQVEEMQAVNAVLYGKYTMEGDQFEKIEVDFGRSTKNNITQGSGKEWSKQDRDTFDPTHDIDLYCDLASGLVNIAIMDGTVWRLLNGFKLFREKLDTRRGSNSQLETAVKDLGAVVSFKGYYGDLAIVVAKTSYIAEDGIEKRYLPDGMLVLGNTAADGIRCYGAIQDAQALSEGVVASSRYPKHWLTVGDPAREFTMTQSAPLMVLPDPDEFVVVQVK.

It belongs to the lambda phage major capsid protein family.

The chain is P21 prophage-derived major head protein from Escherichia coli O6:H1 (strain CFT073 / ATCC 700928 / UPEC).